Consider the following 431-residue polypeptide: Enolase (431 aa).

A (2R)-2-phosphoglycerate-binding site is contributed by Gln-167. Glu-209 serves as the catalytic Proton donor. Residues Asp-246, Glu-287, and Asp-314 each coordinate Mg(2+). 4 residues coordinate (2R)-2-phosphoglycerate: Lys-339, Arg-368, Ser-369, and Lys-390. Catalysis depends on Lys-339, which acts as the Proton acceptor.

The protein belongs to the enolase family. Mg(2+) is required as a cofactor.

The protein resides in the cytoplasm. Its subcellular location is the secreted. The protein localises to the cell surface. The catalysed reaction is (2R)-2-phosphoglycerate = phosphoenolpyruvate + H2O. The protein operates within carbohydrate degradation; glycolysis; pyruvate from D-glyceraldehyde 3-phosphate: step 4/5. Catalyzes the reversible conversion of 2-phosphoglycerate (2-PG) into phosphoenolpyruvate (PEP). It is essential for the degradation of carbohydrates via glycolysis. The polypeptide is Enolase (Prochlorococcus marinus (strain MIT 9303)).